The primary structure comprises 236 residues: MTHPVAVKACLFDMDGLLINTEDIYTETLNETLAEFGKGPLTWDVKIKLQGLPGPEAGKRVIEHYKLPITLDEYDERNVALQSLKWGTCEFLPGALNLLKYLKLKNIPIALCTSSNKTKFRGKTSHLEEGFDLFDTIVTGDDPRIAKGRGKPFPDIWQLGLKELNEKFHTDIKPDECIVFEDGIPGVKSAKAFGAHVIWVPHPEAHAVLGDTEALLAGKGELLSSLEKLEMSKYGL.

Belongs to the HAD-like hydrolase superfamily.

The enzyme catalyses XMP + H2O = xanthosine + phosphate. It catalyses the reaction psi-UMP + H2O = pseudouridine + phosphate. In terms of biological role, nucleotidase with XMP as the best in vitro substrate. Low catalytic efficiencies of YKL033W-A observed with XMP and other substrates suggest that these could be secondary activities for this protein, and its primary substrate is not yet identified. May possess pseudouridine 5'-phosphatase activity and together with dTTP/UTP pyrophosphatase YOR111W might constitute a pathway for the detoxification of pseudouridine 5'-triphosphate (Psi-UTP) and -monophosphate (Psi-UMP). This Saccharomyces cerevisiae (strain ATCC 204508 / S288c) (Baker's yeast) protein is Probable pseudouridine-5'-phosphatase YKL033W-A.